Here is a 109-residue protein sequence, read N- to C-terminus: Nucleoid-associated protein Asuc_0997 (109 aa).

The disordered stretch occupies residues 1–23 (MFGKGGLGGLMKQAQQMQERMQK).

The protein belongs to the YbaB/EbfC family. As to quaternary structure, homodimer.

The protein localises to the cytoplasm. It is found in the nucleoid. In terms of biological role, binds to DNA and alters its conformation. May be involved in regulation of gene expression, nucleoid organization and DNA protection. The chain is Nucleoid-associated protein Asuc_0997 from Actinobacillus succinogenes (strain ATCC 55618 / DSM 22257 / CCUG 43843 / 130Z).